A 410-amino-acid chain; its full sequence is Inositol hexakisphosphate kinase 3 (410 aa).

211 to 219 provides a ligand contact to substrate; it reads PCVLDLKMG. A disordered region spans residues 333–358; sequence QEPPERAPGSPHPHEAPQAAHGSSPG.

The protein belongs to the inositol phosphokinase (IPK) family. As to expression, detected in brain.

It is found in the cytoplasm. The catalysed reaction is 1D-myo-inositol hexakisphosphate + ATP = 5-diphospho-1D-myo-inositol 1,2,3,4,6-pentakisphosphate + ADP. The enzyme catalyses 1-diphospho-1D-myo-inositol 2,3,4,5,6-pentakisphosphate + ATP + H(+) = 1,5-bis(diphospho)-1D-myo-inositol 2,3,4,6-tetrakisphosphate + ADP. In terms of biological role, converts inositol hexakisphosphate (InsP6) to diphosphoinositol pentakisphosphate (InsP7/PP-InsP5). Converts 1,3,4,5,6-pentakisphosphate (InsP5) to PP-InsP4. This is Inositol hexakisphosphate kinase 3 (IP6K3) from Homo sapiens (Human).